We begin with the raw amino-acid sequence, 219 residues long: Endonuclease III (219 aa).

The HhH domain occupies 117-136 (MEELLTLPGVARKTANVVLA). [4Fe-4S] cluster is bound by residues C197, C204, C207, and C213.

This sequence belongs to the Nth/MutY family. The cofactor is [4Fe-4S] cluster.

It catalyses the reaction 2'-deoxyribonucleotide-(2'-deoxyribose 5'-phosphate)-2'-deoxyribonucleotide-DNA = a 3'-end 2'-deoxyribonucleotide-(2,3-dehydro-2,3-deoxyribose 5'-phosphate)-DNA + a 5'-end 5'-phospho-2'-deoxyribonucleoside-DNA + H(+). DNA repair enzyme that has both DNA N-glycosylase activity and AP-lyase activity. The DNA N-glycosylase activity releases various damaged pyrimidines from DNA by cleaving the N-glycosidic bond, leaving an AP (apurinic/apyrimidinic) site. The AP-lyase activity cleaves the phosphodiester bond 3' to the AP site by a beta-elimination, leaving a 3'-terminal unsaturated sugar and a product with a terminal 5'-phosphate. In Synechocystis sp. (strain ATCC 27184 / PCC 6803 / Kazusa), this protein is Endonuclease III.